We begin with the raw amino-acid sequence, 213 residues long: Endoplasmic reticulum vesicle protein 25 (213 aa).

The signal sequence occupies residues 1–20; the sequence is MILRIPSLLYLFTLLTAVYA. Over 21-181 the chain is Lumenal; that stretch reads VKFDLTSDRN…TNESTNQRVK (161 aa). Positions 33–122 constitute a GOLD domain; it reads PKCIWNFASA…VRSVELDVDI (90 aa). A helical transmembrane segment spans residues 182-202; it reads VFSVLIICCTIGLGVWQLLHL. Topologically, residues 203–213 are cytoplasmic; sequence RSFFKRKYLID.

Belongs to the EMP24/GP25L family.

The protein resides in the endoplasmic reticulum membrane. Its subcellular location is the golgi apparatus membrane. Constituent of COPII-coated endoplasmic reticulum-derived transport vesicles. Required for efficient transport of a subset of secretory proteins to the Golgi. Facilitates retrograde transport from the Golgi to the endoplasmic reticulum. This is Endoplasmic reticulum vesicle protein 25 (ERV25) from Cryptococcus neoformans var. neoformans serotype D (strain JEC21 / ATCC MYA-565) (Filobasidiella neoformans).